Here is a 150-residue protein sequence, read N- to C-terminus: Transcriptional repressor NrdR (150 aa).

Residues 3 to 34 fold into a zinc finger; it reads CPFCNFSDSKVVDSRPDKGGAAIRRRRECESC. The ATP-cone domain occupies 49–139; sequence PLVTKRDGRR…VYRSFKDINE (91 aa).

The protein belongs to the NrdR family. Zn(2+) is required as a cofactor.

Functionally, negatively regulates transcription of bacterial ribonucleotide reductase nrd genes and operons by binding to NrdR-boxes. The protein is Transcriptional repressor NrdR of Citrifermentans bemidjiense (strain ATCC BAA-1014 / DSM 16622 / JCM 12645 / Bem) (Geobacter bemidjiensis).